A 716-amino-acid polypeptide reads, in one-letter code: Eosinophil peroxidase (716 aa).

Positions 1–18 (MMQQLLALVGALATLILT) are cleaved as a signal peptide. Residues 19–140 (QHAEGTAPAS…SGCALQDQAE (122 aa)) constitute a propeptide that is removed on maturation. N-linked (GlcNAc...) asparagine glycans are attached at residues Asn53 and Asn114. A disulfide bridge links Cys142 with Cys153. Position 233 (Asp233) interacts with heme b. His234 functions as the Proton acceptor in the catalytic mechanism. A Ca(2+)-binding site is contributed by Asp235. 2 disulfide bridges follow: Cys254/Cys264 and Cys258/Cys282. Ca(2+)-binding residues include Thr307, Phe309, Asp311, and Ser313. Residues Asn328 and Asn364 are each glycosylated (N-linked (GlcNAc...) asparagine). Cys360 and Cys371 are oxidised to a cystine. Heme b contacts are provided by Glu381 and His475. Tyr489 carries the post-translational modification 3'-nitrotyrosine. Intrachain disulfides connect Cys579–Cys636 and Cys677–Cys702. Asn709 is a glycosylation site (N-linked (GlcNAc...) asparagine).

It belongs to the peroxidase family. XPO subfamily. In terms of assembly, tetramer of two light chains and two heavy chains. Ca(2+) serves as cofactor. Heme b is required as a cofactor.

It localises to the cytoplasmic granule. It carries out the reaction 2 a phenolic donor + H2O2 = 2 a phenolic radical donor + 2 H2O. Mediates tyrosine nitration of secondary granule proteins in mature resting eosinophils. The chain is Eosinophil peroxidase (Epx) from Mus musculus (Mouse).